The chain runs to 569 residues: Probable santalene synthase (569 aa).

5 residues coordinate (2E)-geranyl diphosphate: R284, D321, D325, R460, and N463. The Mg(2+) site is built by D321 and D325. The DDXXD motif signature appears at 321 to 325 (DDAYD). Mg(2+) contacts are provided by N463, T467, and E471.

Belongs to the terpene synthase family. Tpsb subfamily. The cofactor is Mg(2+). Mn(2+) serves as cofactor.

Catalyzes the formation of santalene. The sequence is that of Probable santalene synthase (SSY) from Santalum murrayanum (Bitter quandong).